Reading from the N-terminus, the 610-residue chain is Membrane protein insertase YidC (610 aa).

The helical transmembrane segment at 7–27 (FFITIALSILILALWQVFYLG) threads the bilayer. The segment at 36–82 (QARIEEQQRQAQQAAQNRQASSSTGDTPQMPANPDSIPGQGDTKAAG) is disordered. Residues 44–55 (RQAQQAAQNRQA) show a composition bias toward low complexity. 5 helical membrane passes run 358–378 (FDLL…FYLI), 387–407 (NFGV…FPLA), 458–478 (WPVL…YVTI), 510–530 (TVPH…TMFL), and 546–566 (IFTW…AGLV).

This sequence belongs to the OXA1/ALB3/YidC family. Type 1 subfamily. In terms of assembly, interacts with the Sec translocase complex via SecD. Specifically interacts with transmembrane segments of nascent integral membrane proteins during membrane integration.

The protein resides in the cell inner membrane. Functionally, required for the insertion and/or proper folding and/or complex formation of integral membrane proteins into the membrane. Involved in integration of membrane proteins that insert both dependently and independently of the Sec translocase complex, as well as at least some lipoproteins. Aids folding of multispanning membrane proteins. In Brucella suis biovar 1 (strain 1330), this protein is Membrane protein insertase YidC.